Reading from the N-terminus, the 161-residue chain is N5-carboxyaminoimidazole ribonucleotide mutase (161 aa).

Substrate contacts are provided by S9, D12, and R39.

It belongs to the AIR carboxylase family. Class I subfamily.

It catalyses the reaction 5-carboxyamino-1-(5-phospho-D-ribosyl)imidazole + H(+) = 5-amino-1-(5-phospho-D-ribosyl)imidazole-4-carboxylate. It participates in purine metabolism; IMP biosynthesis via de novo pathway; 5-amino-1-(5-phospho-D-ribosyl)imidazole-4-carboxylate from 5-amino-1-(5-phospho-D-ribosyl)imidazole (N5-CAIR route): step 2/2. Its function is as follows. Catalyzes the conversion of N5-carboxyaminoimidazole ribonucleotide (N5-CAIR) to 4-carboxy-5-aminoimidazole ribonucleotide (CAIR). This chain is N5-carboxyaminoimidazole ribonucleotide mutase, found in Vibrio parahaemolyticus serotype O3:K6 (strain RIMD 2210633).